The sequence spans 71 residues: XETYGEPGNTPDDYVHAHNNIRRVLGMXPKXQGAIDGSSXVQLXLDEXLDYDYNXNKXIKPPGNVVGQLPY.

Glycosylated. High-mannose oligosaccharides (Man(5-9)GlcNAc(2)).

The sequence is that of Allergen Art v 2 from Artemisia vulgaris (Mugwort).